The chain runs to 238 residues: Phosphoribosylaminoimidazole-succinocarboxamide synthase (238 aa).

The protein belongs to the SAICAR synthetase family.

It catalyses the reaction 5-amino-1-(5-phospho-D-ribosyl)imidazole-4-carboxylate + L-aspartate + ATP = (2S)-2-[5-amino-1-(5-phospho-beta-D-ribosyl)imidazole-4-carboxamido]succinate + ADP + phosphate + 2 H(+). It participates in purine metabolism; IMP biosynthesis via de novo pathway; 5-amino-1-(5-phospho-D-ribosyl)imidazole-4-carboxamide from 5-amino-1-(5-phospho-D-ribosyl)imidazole-4-carboxylate: step 1/2. The chain is Phosphoribosylaminoimidazole-succinocarboxamide synthase from Desulfitobacterium hafniense (strain Y51).